The primary structure comprises 69 residues: MSQPNSQQPTIVKCPTCQNKVVWNTESEFRPFCSKKCQMIDFGEWADEEKSIAGAPDMSDSDGWSSEPY.

Cys14, Cys17, Cys33, and Cys37 together coordinate Zn(2+).

This sequence belongs to the DNA gyrase inhibitor YacG family. As to quaternary structure, interacts with GyrB. Requires Zn(2+) as cofactor.

Its function is as follows. Inhibits all the catalytic activities of DNA gyrase by preventing its interaction with DNA. Acts by binding directly to the C-terminal domain of GyrB, which probably disrupts DNA binding by the gyrase. This is DNA gyrase inhibitor YacG from Aliivibrio salmonicida (strain LFI1238) (Vibrio salmonicida (strain LFI1238)).